We begin with the raw amino-acid sequence, 406 residues long: Ubiquitin-like modifier-activating enzyme 5 (406 aa).

Positions 82, 103, 126, 149, and 183 each coordinate ATP. Zn(2+) is bound by residues C225 and C228. C249 serves as the catalytic Glycyl thioester intermediate. Residues C302 and C307 each coordinate Zn(2+). A disordered region spans residues 373–397; sequence EAPSKSTETTSEATTTTTGDETSLD. Residues 378–393 show a composition bias toward low complexity; sequence STETTSEATTTTTGDE.

It belongs to the ubiquitin-activating E1 family. UBA5 subfamily.

E1-like enzyme which activates UFM1. The chain is Ubiquitin-like modifier-activating enzyme 5 from Drosophila willistoni (Fruit fly).